A 386-amino-acid polypeptide reads, in one-letter code: Succinate--CoA ligase [ADP-forming] subunit beta (386 aa).

One can recognise an ATP-grasp domain in the interval 9-244 (KEILRSYGVS…LDEEDPKEVE (236 aa)). Residues K46, 53–55 (GRG), E99, C102, and E107 contribute to the ATP site. Mg(2+) contacts are provided by N199 and D213. Substrate contacts are provided by residues N264 and 321–323 (GIM).

Belongs to the succinate/malate CoA ligase beta subunit family. Heterotetramer of two alpha and two beta subunits. It depends on Mg(2+) as a cofactor.

It carries out the reaction succinate + ATP + CoA = succinyl-CoA + ADP + phosphate. It catalyses the reaction GTP + succinate + CoA = succinyl-CoA + GDP + phosphate. Its pathway is carbohydrate metabolism; tricarboxylic acid cycle; succinate from succinyl-CoA (ligase route): step 1/1. Succinyl-CoA synthetase functions in the citric acid cycle (TCA), coupling the hydrolysis of succinyl-CoA to the synthesis of either ATP or GTP and thus represents the only step of substrate-level phosphorylation in the TCA. The beta subunit provides nucleotide specificity of the enzyme and binds the substrate succinate, while the binding sites for coenzyme A and phosphate are found in the alpha subunit. The sequence is that of Succinate--CoA ligase [ADP-forming] subunit beta from Geobacillus kaustophilus (strain HTA426).